A 96-amino-acid chain; its full sequence is Glutamyl-tRNA(Gln) amidotransferase subunit C (96 aa).

This sequence belongs to the GatC family. Heterotrimer of A, B and C subunits.

It carries out the reaction L-glutamyl-tRNA(Gln) + L-glutamine + ATP + H2O = L-glutaminyl-tRNA(Gln) + L-glutamate + ADP + phosphate + H(+). It catalyses the reaction L-aspartyl-tRNA(Asn) + L-glutamine + ATP + H2O = L-asparaginyl-tRNA(Asn) + L-glutamate + ADP + phosphate + 2 H(+). Functionally, allows the formation of correctly charged Asn-tRNA(Asn) or Gln-tRNA(Gln) through the transamidation of misacylated Asp-tRNA(Asn) or Glu-tRNA(Gln) in organisms which lack either or both of asparaginyl-tRNA or glutaminyl-tRNA synthetases. The reaction takes place in the presence of glutamine and ATP through an activated phospho-Asp-tRNA(Asn) or phospho-Glu-tRNA(Gln). The chain is Glutamyl-tRNA(Gln) amidotransferase subunit C from Deinococcus radiodurans (strain ATCC 13939 / DSM 20539 / JCM 16871 / CCUG 27074 / LMG 4051 / NBRC 15346 / NCIMB 9279 / VKM B-1422 / R1).